Reading from the N-terminus, the 400-residue chain is Argininosuccinate synthase (400 aa).

8–16 (AYSGGLDTS) lines the ATP pocket. Y87 is a binding site for L-citrulline. ATP is bound at residue G117. L-aspartate is bound by residues T119, N123, and D124. An L-citrulline-binding site is contributed by N123. Residues R127, S175, E260, and Y272 each contribute to the L-citrulline site.

This sequence belongs to the argininosuccinate synthase family. Type 1 subfamily. Homotetramer.

The protein localises to the cytoplasm. It catalyses the reaction L-citrulline + L-aspartate + ATP = 2-(N(omega)-L-arginino)succinate + AMP + diphosphate + H(+). It participates in amino-acid biosynthesis; L-arginine biosynthesis; L-arginine from L-ornithine and carbamoyl phosphate: step 2/3. This Nocardia farcinica (strain IFM 10152) protein is Argininosuccinate synthase.